The primary structure comprises 157 residues: Snaclec EMS16 subunit alpha (157 aa).

Residues 1 to 23 (MGRFISVSFGLLVVFLSLSGTGA) form the signal peptide. 3 disulfides stabilise this stretch: C27-C38, C55-C152, and C127-C144. The 120-residue stretch at 34-153 (YDQHCYLAIG…CEDLYPFVCK (120 aa)) folds into the C-type lectin domain.

This sequence belongs to the snaclec family. As to quaternary structure, heterodimer of subunits A and B; disulfide-linked. Expressed by the venom gland.

The protein localises to the secreted. Its function is as follows. EMS16 is a potent and selective inhibitor of alpha-2/beta-1 (ITGA2/ITGB1) integrin and acts as a potent antagonist of platelet aggregation and cell migration. Binds specifically to the I domain of the alpha-2 subunit, in a metal ion-independent fashion. This is Snaclec EMS16 subunit alpha from Echis multisquamatus (Central Asian sand viper).